A 245-amino-acid polypeptide reads, in one-letter code: tRNA (guanine-N(1)-)-methyltransferase (245 aa).

G114 lines the S-adenosyl-L-methionine pocket.

It belongs to the RNA methyltransferase TrmD family. In terms of assembly, homodimer.

It is found in the cytoplasm. The enzyme catalyses guanosine(37) in tRNA + S-adenosyl-L-methionine = N(1)-methylguanosine(37) in tRNA + S-adenosyl-L-homocysteine + H(+). Functionally, specifically methylates guanosine-37 in various tRNAs. The chain is tRNA (guanine-N(1)-)-methyltransferase from Sphingopyxis alaskensis (strain DSM 13593 / LMG 18877 / RB2256) (Sphingomonas alaskensis).